The primary structure comprises 334 residues: ATP-dependent kinase YFH7 (334 aa).

30–38 (GHPGSGKST) provides a ligand contact to ATP.

This sequence belongs to the YFH7 family.

ATP-dependent kinase that could be involved in endoplasmic reticulum membrane assembly. This chain is ATP-dependent kinase YFH7 (YFH7), found in Eremothecium gossypii (strain ATCC 10895 / CBS 109.51 / FGSC 9923 / NRRL Y-1056) (Yeast).